Here is a 208-residue protein sequence, read N- to C-terminus: Uracil phosphoribosyltransferase (208 aa).

Residues arginine 78, arginine 103, and 130–138 (DPMLATGGS) contribute to the 5-phospho-alpha-D-ribose 1-diphosphate site. Uracil contacts are provided by residues isoleucine 193 and 198 to 200 (GDA). Aspartate 199 provides a ligand contact to 5-phospho-alpha-D-ribose 1-diphosphate.

It belongs to the UPRTase family. Mg(2+) is required as a cofactor.

The catalysed reaction is UMP + diphosphate = 5-phospho-alpha-D-ribose 1-diphosphate + uracil. Its pathway is pyrimidine metabolism; UMP biosynthesis via salvage pathway; UMP from uracil: step 1/1. With respect to regulation, allosterically activated by GTP. Functionally, catalyzes the conversion of uracil and 5-phospho-alpha-D-ribose 1-diphosphate (PRPP) to UMP and diphosphate. The sequence is that of Uracil phosphoribosyltransferase from Colwellia psychrerythraea (strain 34H / ATCC BAA-681) (Vibrio psychroerythus).